Consider the following 148-residue polypeptide: 3-dehydroquinate dehydratase (148 aa).

Tyrosine 23 acts as the Proton acceptor in catalysis. Substrate is bound by residues asparagine 75, histidine 81, and aspartate 88. Histidine 101 serves as the catalytic Proton donor. Residues 102–103 (LS) and arginine 112 contribute to the substrate site.

It belongs to the type-II 3-dehydroquinase family. In terms of assembly, homododecamer.

It carries out the reaction 3-dehydroquinate = 3-dehydroshikimate + H2O. The protein operates within metabolic intermediate biosynthesis; chorismate biosynthesis; chorismate from D-erythrose 4-phosphate and phosphoenolpyruvate: step 3/7. Its function is as follows. Catalyzes a trans-dehydration via an enolate intermediate. This Xanthomonas campestris pv. campestris (strain B100) protein is 3-dehydroquinate dehydratase.